A 499-amino-acid polypeptide reads, in one-letter code: Alpha-L-arabinofuranosidase B (499 aa).

The N-terminal stretch at 1–17 (MFSRRNLLALGLAATVS) is a signal peptide. Positions 18–335 (AGPCDIYEAG…ENIVAAKYVV (318 aa)) are catalytic. Cystine bridges form between cysteine 21/cysteine 31, cysteine 81/cysteine 86, and cysteine 176/cysteine 177. Asparagine 83 is a glycosylation site (N-linked (GlcNAc...) asparagine). Asparagine 202 carries an N-linked (GlcNAc...) asparagine glycan. Position 219 (aspartate 219) interacts with substrate. The Nucleophile role is filled by glutamate 221. Substrate-binding residues include asparagine 222, asparagine 223, and glycine 296. The active-site Proton donor is aspartate 297. The tract at residues 336-499 (GSLVSGPSFT…SFEIETAFAS (164 aa)) is ABD. Cysteines 401 and 439 form a disulfide. Residues histidine 416, asparagine 418, phenylalanine 419, aspartate 435, histidine 463, glutamate 465, leucine 468, and aspartate 488 each contribute to the substrate site.

The protein belongs to the glycosyl hydrolase 54 family.

It localises to the secreted. The enzyme catalyses Hydrolysis of terminal non-reducing alpha-L-arabinofuranoside residues in alpha-L-arabinosides.. Its pathway is glycan metabolism; L-arabinan degradation. Alpha-L-arabinofuranosidase involved in the degradation of arabinoxylan, a major component of plant hemicellulose. Able to hydrolyze 1,5-, 1,3- and 1,2-alpha-linkages not only in L-arabinofuranosyl oligosaccharides, but also in polysaccharides containing terminal non-reducing L-arabinofuranoses in side chains, like L-arabinan, arabinogalactan and arabinoxylan. This Aspergillus kawachii (strain NBRC 4308) (White koji mold) protein is Alpha-L-arabinofuranosidase B (abfB).